Reading from the N-terminus, the 499-residue chain is Aspartyl/glutamyl-tRNA(Asn/Gln) amidotransferase subunit B (499 aa).

This sequence belongs to the GatB/GatE family. GatB subfamily. Heterotrimer of A, B and C subunits.

The enzyme catalyses L-glutamyl-tRNA(Gln) + L-glutamine + ATP + H2O = L-glutaminyl-tRNA(Gln) + L-glutamate + ADP + phosphate + H(+). It catalyses the reaction L-aspartyl-tRNA(Asn) + L-glutamine + ATP + H2O = L-asparaginyl-tRNA(Asn) + L-glutamate + ADP + phosphate + 2 H(+). Its function is as follows. Allows the formation of correctly charged Asn-tRNA(Asn) or Gln-tRNA(Gln) through the transamidation of misacylated Asp-tRNA(Asn) or Glu-tRNA(Gln) in organisms which lack either or both of asparaginyl-tRNA or glutaminyl-tRNA synthetases. The reaction takes place in the presence of glutamine and ATP through an activated phospho-Asp-tRNA(Asn) or phospho-Glu-tRNA(Gln). The sequence is that of Aspartyl/glutamyl-tRNA(Asn/Gln) amidotransferase subunit B from Leifsonia xyli subsp. xyli (strain CTCB07).